The sequence spans 402 residues: Pentalenic acid synthase (402 aa).

The disordered stretch occupies residues 1 to 28 (MTEPGTSVSAPVAFPQDRTCPYDPPTAY). Position 351 (cysteine 351) interacts with heme.

It belongs to the cytochrome P450 family. The cofactor is heme.

The enzyme catalyses 1-deoxypentalenate + reduced 2[4Fe-4S]-[ferredoxin] + O2 + 2 H(+) = pentalenate + oxidized 2[4Fe-4S]-[ferredoxin] + H2O. It functions in the pathway antibiotic biosynthesis; neopentalenolactone biosynthesis. Functionally, catalyzes the conversion of 1-deoxypentalenic acid to pentalenic acid in the biosynthesis of neopentalenolactone antibiotic. The chain is Pentalenic acid synthase (cyp28) from Streptomyces avermitilis (strain ATCC 31267 / DSM 46492 / JCM 5070 / NBRC 14893 / NCIMB 12804 / NRRL 8165 / MA-4680).